Consider the following 197-residue polypeptide: Holliday junction branch migration complex subunit RuvA (197 aa).

The domain I stretch occupies residues 1–63 (MFEYLNGKLV…EDAHSLYGFV (63 aa)). The domain II stretch occupies residues 64 to 142 (NESEKALFLR…ATGAVGISLL (79 aa)). The segment at 142–146 (LDAAP) is flexible linker. Residues 147 to 197 (ASNLALEEAIEALQALGYKATELKKIEKKLAQEAGLTSEEYIKSALKLMMK) form a domain III region.

The protein belongs to the RuvA family. As to quaternary structure, homotetramer. Forms an RuvA(8)-RuvB(12)-Holliday junction (HJ) complex. HJ DNA is sandwiched between 2 RuvA tetramers; dsDNA enters through RuvA and exits via RuvB. An RuvB hexamer assembles on each DNA strand where it exits the tetramer. Each RuvB hexamer is contacted by two RuvA subunits (via domain III) on 2 adjacent RuvB subunits; this complex drives branch migration. In the full resolvosome a probable DNA-RuvA(4)-RuvB(12)-RuvC(2) complex forms which resolves the HJ.

Its subcellular location is the cytoplasm. Its function is as follows. The RuvA-RuvB-RuvC complex processes Holliday junction (HJ) DNA during genetic recombination and DNA repair, while the RuvA-RuvB complex plays an important role in the rescue of blocked DNA replication forks via replication fork reversal (RFR). RuvA specifically binds to HJ cruciform DNA, conferring on it an open structure. The RuvB hexamer acts as an ATP-dependent pump, pulling dsDNA into and through the RuvAB complex. HJ branch migration allows RuvC to scan DNA until it finds its consensus sequence, where it cleaves and resolves the cruciform DNA. The protein is Holliday junction branch migration complex subunit RuvA of Lactococcus lactis subsp. cremoris (strain MG1363).